The following is a 374-amino-acid chain: U-box domain-containing protein 8 (374 aa).

The U-box domain occupies 4–79; sequence DLPNDFRCPI…LNFAHVSLKE (76 aa). ARM repeat units lie at residues 126-165, 167-206, 208-248, 250-288, and 289-327; these read SSIR…NLSL, DDNK…SLAV, EVNK…ALCS, PDNR…KCRG, and GREE…CLCC.

As to expression, expressed in the whole plant.

The catalysed reaction is S-ubiquitinyl-[E2 ubiquitin-conjugating enzyme]-L-cysteine + [acceptor protein]-L-lysine = [E2 ubiquitin-conjugating enzyme]-L-cysteine + N(6)-ubiquitinyl-[acceptor protein]-L-lysine.. It participates in protein modification; protein ubiquitination. Functionally, functions as an E3 ubiquitin ligase. Involved in the age-dependent pseudo-self-compatibility process. This Arabidopsis thaliana (Mouse-ear cress) protein is U-box domain-containing protein 8 (PUB8).